Consider the following 429-residue polypeptide: Ribosomal RNA small subunit methyltransferase B (429 aa).

Residues 254–260 (CAAPGGK), D277, D303, and D322 contribute to the S-adenosyl-L-methionine site. C375 serves as the catalytic Nucleophile. Residues 397-419 (ALSETGTPDQPGQQNLPGGEEGD) form a disordered region. A compositionally biased stretch (polar residues) spans 400–412 (ETGTPDQPGQQNL).

This sequence belongs to the class I-like SAM-binding methyltransferase superfamily. RsmB/NOP family.

The protein resides in the cytoplasm. It carries out the reaction cytidine(967) in 16S rRNA + S-adenosyl-L-methionine = 5-methylcytidine(967) in 16S rRNA + S-adenosyl-L-homocysteine + H(+). Its function is as follows. Specifically methylates the cytosine at position 967 (m5C967) of 16S rRNA. The sequence is that of Ribosomal RNA small subunit methyltransferase B from Salmonella paratyphi B (strain ATCC BAA-1250 / SPB7).